Reading from the N-terminus, the 364-residue chain is Medium-wave-sensitive opsin 2 (364 aa).

Residues 1-23 (MAQQWSLQRLAGRHPQDSYEDST) are disordered. Topologically, residues 1–52 (MAQQWSLQRLAGRHPQDSYEDSTQSSIFTYTNSNSTRGPFEGPNYHIAPRWV) are extracellular. The required for 11-cis-retinal regeneration stretch occupies residues 17-43 (DSYEDSTQSSIFTYTNSNSTRGPFEGP). A glycan (N-linked (GlcNAc...) asparagine) is linked at Asn34. The helical transmembrane segment at 53–77 (YHLTSVWMIFVVIASVFTNGLVLAA) threads the bilayer. The Cytoplasmic segment spans residues 78–89 (TMKFKKLRHPLN). The helical transmembrane segment at 90 to 115 (WILVNLAVADLAETVIASTISVVNQV) threads the bilayer. Topologically, residues 116-129 (YGYFVLGHPMCVLE) are extracellular. The cysteines at positions 126 and 203 are disulfide-linked. A helical membrane pass occupies residues 130–149 (GYTVSLCGITGLWSLAIISW). At 150-168 (ERWMVVCKPFGNVRFDAKL) the chain is on the cytoplasmic side. The chain crosses the membrane as a helical span at residues 169 to 192 (AIVGIAFSWIWAAVWTAPPIFGWS). Over 193-218 (RYWPHGLKTSCGPDVFSGSSYPGVQS) the chain is Extracellular. A helical transmembrane segment spans residues 219–246 (YMIVLMVTCCITPLSIIVLCYLQVWLAI). Topologically, residues 247–268 (RAVAKQQKESESTQKAEKEVTR) are cytoplasmic. Residues 269–292 (MVVVMVLAFCFCWGPYAFFACFAA) traverse the membrane as a helical segment. Over 293-300 (ANPGYPFH) the chain is Extracellular. A helical membrane pass occupies residues 301 to 325 (PLMAALPAFFAKSATIYNPVIYVFM). The residue at position 312 (Lys312) is an N6-(retinylidene)lysine. The Cytoplasmic portion of the chain corresponds to 326–364 (NRQFRNCILQLFGKKVDDGSELSSASKTEVSSVSSVSPA).

The protein belongs to the G-protein coupled receptor 1 family. Opsin subfamily. N-glycosylated. O-glycosylated. In terms of processing, phosphorylated on some or all of the serine and threonine residues present in the C-terminal region.

The protein resides in the cell membrane. Functionally, visual pigments are the light-absorbing molecules that mediate vision. They consist of an apoprotein, opsin, covalently linked to cis-retinal. This Homo sapiens (Human) protein is Medium-wave-sensitive opsin 2.